We begin with the raw amino-acid sequence, 408 residues long: S-adenosylmethionine sensor upstream of mTORC1 (408 aa).

Over residues 1 to 16 (MEAAPRSRPRPGGAAA) the composition is skewed to low complexity. The tract at residues 1-37 (MEAAPRSRPRPGGAAASPPPPPPPPPPEQERKLEQEK) is disordered. The segment covering 17–27 (SPPPPPPPPPP) has biased composition (pro residues). Basic and acidic residues predominate over residues 28-37 (EQERKLEQEK). S-adenosyl-L-methionine-binding residues include arginine 97, glycine 175, aspartate 193, aspartate 205, phenylalanine 206, and serine 247.

The protein belongs to the BMT2/SAMTOR family. In terms of assembly, interacts with the GATOR1 complex; interaction is disrupted when SAMTOR binds S-adenosyl-L-methionine. Interacts with the KICSTOR complex; interaction is disrupted when SAMTOR binds S-adenosyl-L-methionine.

In terms of biological role, S-adenosyl-L-methionine-binding protein that acts as an inhibitor of mTORC1 signaling via interaction with the GATOR1 and KICSTOR complexes. Acts as a sensor of S-adenosyl-L-methionine to signal methionine sufficiency to mTORC1: in presence of methionine, binds S-adenosyl-L-methionine, leading to disrupt interaction with the GATOR1 and KICSTOR complexes and promote mTORC1 signaling. Upon methionine starvation, S-adenosyl-L-methionine levels are reduced, thereby promoting the association with GATOR1 and KICSTOR, leading to inhibit mTORC1 signaling. Probably also acts as a S-adenosyl-L-methionine-dependent methyltransferase. The polypeptide is S-adenosylmethionine sensor upstream of mTORC1 (Gallus gallus (Chicken)).